Consider the following 1100-residue polypeptide: Sorbin and SH3 domain-containing protein 2 (1100 aa).

Tyrosine 13, serine 14, histidine 27, glycine 28, serine 30, and serine 43 each carry phosphoserine. The segment covering 30–52 (SLDSTDTYPQHAQSLDGTTSSSI) has biased composition (polar residues). A disordered region spans residues 30-57 (SLDSTDTYPQHAQSLDGTTSSSIPLYRS). The region spanning 66-127 (VIKAPHYPGI…YNTPYTYNAG (62 aa)) is the SoHo domain. A compositionally biased stretch (polar residues) spans 134-147 (SAQSHPAAKTQTYR). Residues 134–311 (SAQSHPAAKT…SPSRAKGGDD (178 aa)) form a disordered region. An Alanine amide modification is found at histidine 153. Serine 154 and serine 157 each carry phosphoserine. The span at 167–180 (PVPPPHVPPPVPPL) shows a compositional bias: pro residues. The segment covering 181–217 (RPRDRSSTEKHDWDPPDRKVDTRKFRSEPRSIFEYEP) has biased composition (basic and acidic residues). Serine 234 and isoleucine 236 each carry phosphothreonine. Phosphoserine is present on residues serine 239, serine 245, serine 248, lysine 258, serine 259, and glutamate 260. Phosphothreonine occurs at positions 277, 280, and 282. Serine 287 is subject to Phosphoserine. Residues 287–304 (SSTTLTKSFTSSSPSSPS) show a composition bias toward low complexity. Threonine 292 carries the phosphothreonine modification. Residues phenylalanine 295, serine 297, serine 298, serine 299, serine 301, serine 302, serine 304, alanine 306, aspartate 311, and proline 316 each carry the phosphoserine modification. Serine 320, serine 322, and glycine 326 each carry phosphothreonine. Residues histidine 341, valine 344, and arginine 346 each carry the phosphoserine modification. Residue glutamate 366 is modified to Phosphothreonine. Serine 381 and serine 383 each carry phosphoserine. A phosphothreonine mark is found at aspartate 413 and lysine 415. Arginine 437 and arginine 439 each carry phosphoserine. Isoleucine 459 is subject to Phosphothreonine. Phosphoserine is present on residues lysine 474, serine 494, serine 497, serine 550, and serine 750. A disordered region spans residues 807 to 866 (RMPRSASFQDVDTANSSCHHQDRGGALQDRESPRSYSSTLTDMGRSAPRERRGTPEKEKL). Over residues 812–824 (ASFQDVDTANSSC) the composition is skewed to polar residues. Residues 825 to 839 (HHQDRGGALQDRESP) show a composition bias toward basic and acidic residues. Serine 843 bears the Phosphoserine mark. Residues 853-866 (APRERRGTPEKEKL) show a composition bias toward basic and acidic residues. SH3 domains follow at residues 863–922 (KEKL…KLTP) and 938–999 (GEIG…VVKK). Phosphoserine occurs at positions 1017 and 1023. Residues 1041–1100 (GGGEPFQALYNYTPRNEDELELRESDVIDVMEKCDDGWFVGTSRRTKFFGTFPGNYVKRL) enclose the SH3 3 domain.

Interacts with ABL, CBL, DNM1, DNM2, FLOT1, AFDN, PTK2B/PYK2, SAPAP, SPTAN1, SYNJ1, SYNJ2, VCL/vinculin and WASF. Interacts with ABL1/c-Abl, ABL2/v-Abl/Arg, ACTN, CBL and PALLD. Interacts with PTPN12 and WASF1 via its SH3 domains; this interaction may mediate the partial PTPN12 and WASF1 translocation to focal adhesion sites. Post-translationally, ubiquitinated by CBL. In terms of processing, dephosphorylated by PTPN12. As to expression, abundantly expressed in heart. In cardiac muscle cells, located in the Z-disks of sarcomere. Also found, but to a lower extent, in small and large intestine, pancreas, thymus, colon, spleen, prostate, testis, brain, ovary and epithelial cells. In the pancreas, mainly expressed in acinar cells, duct cells and all cell types in islets (at protein level). Tends to be down-regulated in pancreatic adenocarcinomas ans metastases.

It localises to the cytoplasm. The protein localises to the perinuclear region. It is found in the apical cell membrane. The protein resides in the cell junction. Its subcellular location is the focal adhesion. It localises to the cell projection. The protein localises to the lamellipodium. Its function is as follows. Adapter protein that plays a role in the assembling of signaling complexes, being a link between ABL kinases and actin cytoskeleton. Can form complex with ABL1 and CBL, thus promoting ubiquitination and degradation of ABL1. May play a role in the regulation of pancreatic cell adhesion, possibly by acting on WASF1 phosphorylation, enhancing phosphorylation by ABL1, as well as dephosphorylation by PTPN12. Isoform 6 increases water and sodium absorption in the intestine and gall-bladder. The chain is Sorbin and SH3 domain-containing protein 2 (SORBS2) from Homo sapiens (Human).